Consider the following 326-residue polypeptide: Tagatose 1,6-diphosphate aldolase (326 aa).

This sequence belongs to the aldolase LacD family.

The enzyme catalyses D-tagatofuranose 1,6-bisphosphate = D-glyceraldehyde 3-phosphate + dihydroxyacetone phosphate. It functions in the pathway carbohydrate metabolism; D-tagatose 6-phosphate degradation; D-glyceraldehyde 3-phosphate and glycerone phosphate from D-tagatose 6-phosphate: step 2/2. The polypeptide is Tagatose 1,6-diphosphate aldolase (Streptococcus pneumoniae serotype 4 (strain ATCC BAA-334 / TIGR4)).